Here is a 450-residue protein sequence, read N- to C-terminus: Bifunctional apoptosis regulator (450 aa).

The segment covering 1 to 20 (MEEPQKNDLSMREQEEEHPV) has biased composition (basic and acidic residues). Residues 1–25 (MEEPQKNDLSMREQEEEHPVRSSGP) are disordered. Residues 1–140 (MEEPQKNDLS…PSTGRVNPQR (140 aa)) lie on the Cytoplasmic side of the membrane. Residues 34-74 (CHCCYDTLVNPTTLNCGHSFCRHCLALWWMSSKKTECPECR) form an RING-type zinc finger. Residues 141–161 (GGGFFSGVLTALTGVAVILLV) form a helical membrane-spanning segment. At 162-331 (YHWRSRESEH…REPTWKQWRE (170 aa)) the chain is on the extracellular side. The SAM domain maps to 182-249 (WTMEEVVLWL…LTELERVRAL (68 aa)). Asparagine 232 and asparagine 308 each carry an N-linked (GlcNAc...) asparagine glycan. The helical transmembrane segment at 332–352 (FLVKYSFLPYQLIAEFAWDWL) threads the bilayer. Residues 353–360 (EVHYWTSR) lie on the Cytoplasmic side of the membrane. A helical membrane pass occupies residues 361–381 (FLIVNAVLLSVLELFSFWRIW). Topologically, residues 382 to 404 (SRSELKTVPQRMWSHFWKVSTQG) are extracellular. The chain crosses the membrane as a helical span at residues 405–425 (LFMAMFWPLIPQFVCNCLFYW). Over 426–450 (ALYFNPIINIDLVVKEVRRLETQVL) the chain is Cytoplasmic.

Interacts with CASP8, BCL2 and BCL2L1 through SAM domain and also with HIP1, IFT57, ESRRBL1 and BCAP31. Interacts with NGFR; this interaction inhibits NF-kappa-B and JNK-related signaling pathways. Post-translationally, mediates RING-dependent self-ubiquitination leading to proteasomal degradation.

The protein localises to the endoplasmic reticulum membrane. It catalyses the reaction S-ubiquitinyl-[E2 ubiquitin-conjugating enzyme]-L-cysteine + [acceptor protein]-L-lysine = [E2 ubiquitin-conjugating enzyme]-L-cysteine + N(6)-ubiquitinyl-[acceptor protein]-L-lysine.. In terms of biological role, membrane-bound E3 ubiquitin ligase that plays a role in several processes including apoptosis regulation or reticulum endoplasmic stress. Has anti-apoptotic activity, both for apoptosis triggered via death-receptors and via mitochondrial factors. Contributes to the dynamic control of IRE1/ERN1 signaling during ER stress by inducing BAX inhibitor 1/TMBIM6 proteasomal degradation. Promotes the activation of TGF-beta signaling by mediating the 'Lys-63'-linked ubiquitination of TGFBR1 which is critical to activate the pathway. Together with NGFR, negatively regulates NF-kappa-B and JNK-related signaling pathways. Promotes the proteasome-mediated degradation of PNPLA3, a protein involveld in lipid metabolism. This Mus musculus (Mouse) protein is Bifunctional apoptosis regulator (Bfar).